The following is a 427-amino-acid chain: 3-phosphoshikimate 1-carboxyvinyltransferase (427 aa).

Positions 20, 21, and 25 each coordinate 3-phosphoshikimate. Phosphoenolpyruvate is bound at residue Lys-20. Phosphoenolpyruvate is bound by residues Gly-92 and Arg-120. 4 residues coordinate 3-phosphoshikimate: Ser-165, Gln-167, Asp-313, and Lys-340. Phosphoenolpyruvate is bound at residue Gln-167. Residue Asp-313 is the Proton acceptor of the active site. Phosphoenolpyruvate contacts are provided by Arg-344 and Arg-388.

It belongs to the EPSP synthase family. As to quaternary structure, monomer.

It localises to the cytoplasm. The enzyme catalyses 3-phosphoshikimate + phosphoenolpyruvate = 5-O-(1-carboxyvinyl)-3-phosphoshikimate + phosphate. It participates in metabolic intermediate biosynthesis; chorismate biosynthesis; chorismate from D-erythrose 4-phosphate and phosphoenolpyruvate: step 6/7. Catalyzes the transfer of the enolpyruvyl moiety of phosphoenolpyruvate (PEP) to the 5-hydroxyl of shikimate-3-phosphate (S3P) to produce enolpyruvyl shikimate-3-phosphate and inorganic phosphate. This Geobacillus kaustophilus (strain HTA426) protein is 3-phosphoshikimate 1-carboxyvinyltransferase.